The chain runs to 260 residues: Snake venom serine protease homolog 2 (260 aa).

The first 18 residues, 1 to 18, serve as a signal peptide directing secretion; that stretch reads MVLIRVLANLLVLQLSYA. The propeptide occupies 19-24; sequence QKSSEL. Residues 25-251 form the Peptidase S1 domain; that stretch reads VIGGDECNIN…YTDWIQSIIA (227 aa). 6 disulfide bridges follow: Cys31–Cys165, Cys52–Cys68, Cys100–Cys258, Cys144–Cys212, Cys176–Cys191, and Cys202–Cys227. Asn123 carries an N-linked (GlcNAc...) asparagine glycan. N-linked (GlcNAc...) asparagine glycosylation is present at Asn253.

Belongs to the peptidase S1 family. Snake venom subfamily. Expressed by the venom gland.

It localises to the secreted. In terms of biological role, snake venom serine protease homolog that may act in the hemostasis system of the prey. This chain is Snake venom serine protease homolog 2, found in Macrovipera lebetinus (Levantine viper).